Reading from the N-terminus, the 878-residue chain is Phosphoenolpyruvate carboxylase (878 aa).

Active-site residues include His-138 and Lys-545.

Belongs to the PEPCase type 1 family. The cofactor is Mg(2+).

It catalyses the reaction oxaloacetate + phosphate = phosphoenolpyruvate + hydrogencarbonate. Functionally, forms oxaloacetate, a four-carbon dicarboxylic acid source for the tricarboxylic acid cycle. The protein is Phosphoenolpyruvate carboxylase of Shewanella halifaxensis (strain HAW-EB4).